The sequence spans 102 residues: Apolipoprotein A-II (102 aa).

The signal sequence occupies residues 1–18 (MKLLAMVALLVTICSLEG). At methionine 49 the chain carries Methionine sulfoxide.

Belongs to the apolipoprotein A2 family. Monomer. Interacts with NAXE and NDRG1. In terms of tissue distribution, plasma.

It is found in the secreted. May stabilize HDL (high density lipoprotein) structure by its association with lipids, and affect the HDL metabolism. The chain is Apolipoprotein A-II (Apoa2) from Rattus norvegicus (Rat).